The following is a 256-amino-acid chain: MAADGIDERSPLISPSSGNVTPTAPPYIQENNLQAELPPPYTAIASPDAGGVPVINCRVCQSLINLDGKLHQHVVKCTVCNEATPIKTPPLGKKYVRCPCNCLLICKDISRRIGCPRPNCRRIINLGPVMLIPEEQPAQPALPVQPDGTRVVCGHCGNTFLWMELRFNTLAKCPHCKKISSVGSALPRRRCCTYITMGMICIFIGVGLTVGTQDFARRFHATYVSWAVAYLVGLVCLVRACYWGAIKFSYPEHSFA.

Over residues 1-10 the composition is skewed to basic and acidic residues; it reads MAADGIDERS. The tract at residues 1–25 is disordered; the sequence is MAADGIDERSPLISPSSGNVTPTAP. Polar residues predominate over residues 13–22; that stretch reads ISPSSGNVTP. Cysteine 106 is an active-site residue. Residues 106–112 carry the CX5R motif motif; sequence CKDISRR. The next 2 membrane-spanning stretches (helical) occupy residues 191–211 and 226–246; these read CCTYITMGMICIFIGVGLTVG and WAVAYLVGLVCLVRACYWGAI.

It localises to the late endosome membrane. The protein resides in the lysosome membrane. It carries out the reaction a 1,2-diacyl-sn-glycero-3-phospho-(1D-myo-inositol-4,5-bisphosphate) + H2O = a 1,2-diacyl-sn-glycero-3-phospho-(1D-myo-inositol-5-phosphate) + phosphate. In terms of biological role, catalyzes the hydrolysis of phosphatidylinositol-4,5-bisphosphate (PtdIns-4,5-P2) to phosphatidylinositol-4-phosphate (PtdIns-4-P). The chain is Type II phosphatidylinositol 4,5-bisphosphate 4-phosphatase from Xenopus laevis (African clawed frog).